The chain runs to 120 residues: C-C motif chemokine 27 (120 aa).

The first 25 residues, 1–25 (MMEGLSPASSLPLLLLLLSPAPEAA), serve as a signal peptide directing secretion. Disulfide bonds link C34–C63 and C35–C78.

Belongs to the intercrine beta (chemokine CC) family. Monomer, dimer, and tetramer. Heparin avidly promotes oligomerization. Interacts with TNFAIP6 (via Link domain). In terms of tissue distribution, isoform 1 is predominantly expressed in placenta and weakly in skin. Isoform 2 is predominantly expressed in testes and brain, weakly in kidney and liver and even lower in heart and muscle. Low expression of both isoforms in other tissues.

It is found in the secreted. It localises to the nucleus. Its function is as follows. Chemotactic factor that attracts skin-associated memory T-lymphocytes. May play a role in mediating homing of lymphocytes to cutaneous sites. May play a role in cell migration during embryogenesis. Nuclear forms may facilitate cellular migration by inducing cytoskeletal relaxation. Binds to CCR10. This is C-C motif chemokine 27 (Ccl27) from Mus musculus (Mouse).